A 781-amino-acid polypeptide reads, in one-letter code: Putative amine oxidase [copper-containing] (781 aa).

The first 34 residues, 1–34, serve as a signal peptide directing secretion; that stretch reads MSLPKTANGMDKLKLCYLLLFYLGSSSLTEVSGA. Cys-199 and Cys-203 form a disulfide bridge. 385-395 is a binding site for substrate; it reads FFDSSYMIGMN. The active-site Proton acceptor is Asp-387. An intrachain disulfide couples Cys-405 to Cys-432. 472–477 contributes to the substrate binding site; it reads IANYDY. Residue Tyr-475 is the Schiff-base intermediate with substrate; via topaquinone of the active site. Position 475 is a 2',4',5'-topaquinone (Tyr-475). His-525 and His-527 together coordinate Cu cation. Positions 534, 536, 579, 671, 674, 676, 682, and 683 each coordinate Ca(2+). Asp-534 and Asp-536 together coordinate Mn(2+). Asp-682 lines the Mn(2+) pocket. His-693 serves as a coordination point for Cu cation.

This sequence belongs to the copper/topaquinone oxidase family. In terms of assembly, homodimer. Cu cation serves as cofactor. The cofactor is Ca(2+). It depends on L-topaquinone as a cofactor. Mn(2+) is required as a cofactor. Post-translationally, topaquinone (TPQ) is generated by copper-dependent autoxidation of a specific tyrosyl residue. In terms of tissue distribution, prismatic layer of shell (at protein level). Expressed primarily in the mantle with highest level in the mantle edge and lower level in the mantle pallium.

The protein localises to the secreted. This Margaritifera margaritifera (Freshwater pearl mussel) protein is Putative amine oxidase [copper-containing].